Consider the following 169-residue polypeptide: Mitochondrial ATP-independent inner membrane protease subunit 1b (169 aa).

Residues S47 and K91 contribute to the active site.

It belongs to the peptidase S26 family. IMP1 subfamily. In terms of assembly, heterodimer of 2 subunits, IMP1A/B and IMP12.

The protein resides in the mitochondrion inner membrane. Catalyzes the removal of transit peptides required for the targeting of proteins from the mitochondrial matrix, across the inner membrane, into the inter-membrane space. This is Mitochondrial ATP-independent inner membrane protease subunit 1b from Arabidopsis thaliana (Mouse-ear cress).